Reading from the N-terminus, the 247-residue chain is Ribosomal RNA processing protein 36 homolog (247 aa).

Disordered regions lie at residues 1-29, 62-89, 136-188, and 218-247; these read MDNQLSDSSDDESPTDDCSDEGEVEHLKD, RTQGIPDLETKKKKNKGPQELSSKQRVP, SVEK…RELV, and GKLQKYLTKRRKKTASKDRRHVPERRQVDQ. Residues 8-23 are compositionally biased toward acidic residues; the sequence is SSDDESPTDDCSDEGE. Composition is skewed to basic and acidic residues over residues 136 to 153 and 164 to 174; these read SVEKELKKTKNAEKRKNL and ERSRKSAEAKR. Residues 218 to 240 are compositionally biased toward basic residues; the sequence is GKLQKYLTKRRKKTASKDRRHVP.

The protein belongs to the RRP36 family.

It is found in the nucleus. It localises to the nucleolus. Its function is as follows. Involved in the early processing steps of the pre-rRNA in the maturation pathway leading to the 18S rRNA. The chain is Ribosomal RNA processing protein 36 homolog from Nematostella vectensis (Starlet sea anemone).